The sequence spans 288 residues: N(1)-aminopropylagmatine ureohydrolase (288 aa).

Mn(2+)-binding residues include histidine 114, aspartate 133, histidine 135, aspartate 137, aspartate 213, and aspartate 215.

The protein belongs to the arginase family. Mn(2+) serves as cofactor.

It is found in the cytoplasm. It catalyses the reaction N(1)-(3-aminopropyl)agmatine + H2O = urea + spermidine. The enzyme catalyses agmatine + H2O = urea + putrescine. It functions in the pathway amine and polyamine biosynthesis; spermidine biosynthesis. In terms of biological role, involved in the biosynthesis of polyamines which are thought to support the growth of thermophilic microorganisms under high-temperature conditions. It seems that long-chain and branched-chain of polyamines effectively stabilize DNA and RNA, respectively. Catalyzes the decarboxylation of N1-(3-aminopropyl)agmatine to yield spermidine and urea. It can also use agmatine to yield putrescine. This Thermococcus kodakarensis (strain ATCC BAA-918 / JCM 12380 / KOD1) (Pyrococcus kodakaraensis (strain KOD1)) protein is N(1)-aminopropylagmatine ureohydrolase.